We begin with the raw amino-acid sequence, 82 residues long: DNA-directed RNA polymerase subunit Rpo5 (82 aa).

Belongs to the archaeal Rpo5/eukaryotic RPB5 RNA polymerase subunit family. As to quaternary structure, part of the RNA polymerase complex.

It is found in the cytoplasm. It carries out the reaction RNA(n) + a ribonucleoside 5'-triphosphate = RNA(n+1) + diphosphate. Functionally, DNA-dependent RNA polymerase (RNAP) catalyzes the transcription of DNA into RNA using the four ribonucleoside triphosphates as substrates. The chain is DNA-directed RNA polymerase subunit Rpo5 from Pyrococcus abyssi (strain GE5 / Orsay).